The chain runs to 88 residues: Putative membrane protein insertion efficiency factor (88 aa).

Residues 65 to 88 (LDFVPPKKDKNDDSGHTCKAHHHH) are disordered. The span at 69–80 (PPKKDKNDDSGH) shows a compositional bias: basic and acidic residues.

It belongs to the UPF0161 family.

It localises to the cell membrane. Its function is as follows. Could be involved in insertion of integral membrane proteins into the membrane. This chain is Putative membrane protein insertion efficiency factor, found in Listeria innocua serovar 6a (strain ATCC BAA-680 / CLIP 11262).